We begin with the raw amino-acid sequence, 532 residues long: Cytochrome P450 714B2 (532 aa).

Topologically, residues 1–2 (ME) are lumenal. The chain crosses the membrane as a helical; Signal-anchor for type III membrane protein span at residues 3–23 (VGMVVVVAAKVLVSLWCVGAC). Residues 24–532 (CLAAYLYRVV…LTRVQGAYRH (509 aa)) lie on the Cytoplasmic side of the membrane. Residue C474 coordinates heme.

Belongs to the cytochrome P450 family. Heme serves as cofactor. In terms of tissue distribution, highly expressed in shoot, spikelet and uppermost internode. Detected in roots, leaves and anthers.

The protein resides in the membrane. Functionally, catalyzes the 13-hydroxylation of gibberellins (GAs). Determines the ratio of GA4 and GA1. Converts GA12 into GA53. The chain is Cytochrome P450 714B2 (CYP714B2) from Oryza sativa subsp. japonica (Rice).